A 393-amino-acid chain; its full sequence is 4-O-methyl-glucuronoyl methylesterase (393 aa).

The first 19 residues, 1-19 (MKLSAALLAIAAFANVASA), serve as a signal peptide directing secretion. Gln20 is modified (pyrrolidone carboxylic acid). A disulfide bridge links Cys22 with Cys56. N-linked (GlcNAc...) asparagine glycosylation is found at Asn103 and Asn168. Residues 203–208 (GCSRNG) carry the GXSYXG catalytic site motif motif. 2 disulfide bridges follow: Cys204/Cys340 and Cys236/Cys312. Residue Ser205 is the Nucleophile of the active site. The substrate site is built by Lys209, Gln251, Glu259, and Trp303. Residue His339 is the Proton donor/acceptor of the active site.

Belongs to the carbohydrate esterase 15 (CE15) family.

Its subcellular location is the secreted. It catalyses the reaction a 4-O-methyl-alpha-D-glucuronosyl ester derivative + H2O = 4-O-methyl-alpha-D-glucuronate derivative + an alcohol + H(+). Glucuronoyl esterase which may play a significant role in biomass degradation, as it is considered to disconnect hemicellulose from lignin through the hydrolysis of the ester bond between 4-O-methyl-D-glucuronic acid residues of glucuronoxylans and aromatic alcohols of lignin. The sequence is that of 4-O-methyl-glucuronoyl methylesterase from Schizophyllum commune (strain H4-8 / FGSC 9210) (Split gill fungus).